Here is a 565-residue protein sequence, read N- to C-terminus: Dihydroxy-acid dehydratase (565 aa).

Asp83 provides a ligand contact to Mg(2+). Residue Cys124 coordinates [2Fe-2S] cluster. Residues Asp125 and Lys126 each coordinate Mg(2+). At Lys126 the chain carries N6-carboxylysine. Cys197 serves as a coordination point for [2Fe-2S] cluster. Position 451 (Glu451) interacts with Mg(2+). Catalysis depends on Ser477, which acts as the Proton acceptor.

It belongs to the IlvD/Edd family. As to quaternary structure, homodimer. Requires [2Fe-2S] cluster as cofactor. Mg(2+) serves as cofactor.

The catalysed reaction is (2R)-2,3-dihydroxy-3-methylbutanoate = 3-methyl-2-oxobutanoate + H2O. The enzyme catalyses (2R,3R)-2,3-dihydroxy-3-methylpentanoate = (S)-3-methyl-2-oxopentanoate + H2O. It participates in amino-acid biosynthesis; L-isoleucine biosynthesis; L-isoleucine from 2-oxobutanoate: step 3/4. It functions in the pathway amino-acid biosynthesis; L-valine biosynthesis; L-valine from pyruvate: step 3/4. Its function is as follows. Functions in the biosynthesis of branched-chain amino acids. Catalyzes the dehydration of (2R,3R)-2,3-dihydroxy-3-methylpentanoate (2,3-dihydroxy-3-methylvalerate) into 2-oxo-3-methylpentanoate (2-oxo-3-methylvalerate) and of (2R)-2,3-dihydroxy-3-methylbutanoate (2,3-dihydroxyisovalerate) into 2-oxo-3-methylbutanoate (2-oxoisovalerate), the penultimate precursor to L-isoleucine and L-valine, respectively. The chain is Dihydroxy-acid dehydratase from Symbiobacterium thermophilum (strain DSM 24528 / JCM 14929 / IAM 14863 / T).